The chain runs to 351 residues: UPF0252 protein MJECL39 (351 aa).

A run of 2 helical transmembrane segments spans residues 58–78 (FITFFIIVGLVWAIFPEVWLW) and 91–111 (IIICCLYFIITIILFLFLCGV).

Belongs to the UPF0252 family.

The protein localises to the cell membrane. The chain is UPF0252 protein MJECL39 from Methanocaldococcus jannaschii (strain ATCC 43067 / DSM 2661 / JAL-1 / JCM 10045 / NBRC 100440) (Methanococcus jannaschii).